Here is a 119-residue protein sequence, read N- to C-terminus: MVSRKAVVVLLVVHAAAMLASHTEAFVPIFTYGELQRMQEKERNKGQKKSLSVQQASEELGPLDPSEPTKEEERVVIKLLAPVDIGIRMDSRQLEKYRATLERLLGQAPQSTQNQNAAK.

An N-terminal signal peptide occupies residues 1–25 (MVSRKAVVVLLVVHAAAMLASHTEA). The disordered stretch occupies residues 40–72 (EKERNKGQKKSLSVQQASEELGPLDPSEPTKEE).

The protein belongs to the motilin family.

It localises to the secreted. In terms of biological role, plays an important role in the regulation of interdigestive gastrointestinal motility and indirectly causes rhythmic contraction of duodenal and colonic smooth muscle. The polypeptide is Promotilin (MLN) (Sus scrofa (Pig)).